A 360-amino-acid polypeptide reads, in one-letter code: Protein phosphatase 1 regulatory subunit 7 (360 aa).

Residues Met-1–Leu-65 form a disordered region. An N-acetylalanine modification is found at Ala-2. Ser-12, Ser-24, Ser-27, Ser-44, and Ser-47 each carry phosphoserine. Residues Glu-17–Lys-34 are compositionally biased toward basic and acidic residues. A compositionally biased stretch (acidic residues) spans Glu-53–Gln-63. LRR repeat units follow at residues Asp-77–Lys-98, Lys-99–Gln-120, Ser-121–Thr-142, Glu-143–Thr-164, Arg-165–His-186, Gln-187–Thr-208, Asn-209–Thr-230, Asn-231–Val-252, Asn-253–Asn-274, Lys-275–Thr-296, and Glu-297–Lys-318. A Phosphoserine modification is found at Ser-322. Residues Asn-331–Phe-360 enclose the LRRCT domain.

Belongs to the SDS22 family. Interacts with PPP1CA, PPP1CB and PPP1CC/PPP1G. Interacts with PPP1CC isoform 2 in motile caudal epididymal spermatozoa. In terms of tissue distribution, expressed in epididymal spermatozoa including the principal piece of the flagellum and the head-neck junction.

Its subcellular location is the nucleus. In terms of biological role, regulatory subunit of protein phosphatase 1. Inactivates the PPP1CC isoform 2 during epididymal sperm maturation. This chain is Protein phosphatase 1 regulatory subunit 7 (PPP1R7), found in Bos taurus (Bovine).